The sequence spans 85 residues: Small ribosomal subunit protein uS17 (85 aa).

The protein belongs to the universal ribosomal protein uS17 family. As to quaternary structure, part of the 30S ribosomal subunit.

Its function is as follows. One of the primary rRNA binding proteins, it binds specifically to the 5'-end of 16S ribosomal RNA. The polypeptide is Small ribosomal subunit protein uS17 (Mycoplasma pneumoniae (strain ATCC 29342 / M129 / Subtype 1) (Mycoplasmoides pneumoniae)).